We begin with the raw amino-acid sequence, 296 residues long: Nitrogenase iron protein (296 aa).

11–18 (GKGGIGKS) is an ATP binding site. Cys99 provides a ligand contact to [4Fe-4S] cluster. Position 102 is an ADP-ribosylarginine; by dinitrogenase reductase ADP-ribosyltransferase (Arg102). Cys134 is a [4Fe-4S] cluster binding site.

Belongs to the NifH/BchL/ChlL family. Homodimer. [4Fe-4S] cluster is required as a cofactor. The reversible ADP-ribosylation of Arg-102 inactivates the nitrogenase reductase and regulates nitrogenase activity.

It catalyses the reaction N2 + 8 reduced [2Fe-2S]-[ferredoxin] + 16 ATP + 16 H2O = H2 + 8 oxidized [2Fe-2S]-[ferredoxin] + 2 NH4(+) + 16 ADP + 16 phosphate + 6 H(+). In terms of biological role, the key enzymatic reactions in nitrogen fixation are catalyzed by the nitrogenase complex, which has 2 components: the iron protein and the molybdenum-iron protein. The sequence is that of Nitrogenase iron protein from Dechloromonas aromatica (strain RCB).